We begin with the raw amino-acid sequence, 1571 residues long: Pentafunctional AROM polypeptide 2 (1571 aa).

The segment at 1–380 (MAEPTKISIL…YEPKASVVSN (380 aa)) is 3-dehydroquinate synthase. NAD(+) contacts are provided by residues 44–46 (DTN), 81–84 (ENSK), 112–114 (GGV), and D117. R128 lines the 7-phospho-2-dehydro-3-deoxy-D-arabino-heptonate pocket. Residue 137–138 (TT) participates in NAD(+) binding. Residues D144 and K150 each coordinate 7-phospho-2-dehydro-3-deoxy-D-arabino-heptonate. Residue K159 coordinates NAD(+). N160 serves as a coordination point for 7-phospho-2-dehydro-3-deoxy-D-arabino-heptonate. Residues 177 to 180 (FIDT) and N188 contribute to the NAD(+) site. E192 lines the Zn(2+) pocket. 7-phospho-2-dehydro-3-deoxy-D-arabino-heptonate is bound by residues 192 to 195 (EVIK) and K246. The Proton acceptor; for 3-dehydroquinate synthase activity role is filled by E256. 7-phospho-2-dehydro-3-deoxy-D-arabino-heptonate contacts are provided by residues 260–264 (RNLLN) and H267. H267 is a binding site for Zn(2+). The active-site Proton acceptor; for 3-dehydroquinate synthase activity is the H271. 7-phospho-2-dehydro-3-deoxy-D-arabino-heptonate is bound by residues H283 and K352. Zn(2+) is bound at residue H283. The EPSP synthase stretch occupies residues 393 to 838 (VIPGVPKNLN…WDALKQKFGV (446 aa)). Catalysis depends on C820, which acts as the For EPSP synthase activity. Residues 859–1051 (NASIIIIGMR…RKKHLSFFVS (193 aa)) are shikimate kinase. An ATP-binding site is contributed by 866–873 (GMRGAGKT). The interval 1052 to 1273 (LTLPDLRESG…AAPGQLSAAE (222 aa)) is 3-dehydroquinase. H1175 functions as the Proton acceptor; for 3-dehydroquinate dehydratase activity in the catalytic mechanism. Catalysis depends on K1203, which acts as the Schiff-base intermediate with substrate; for 3-dehydroquinate dehydratase activity. Positions 1286–1571 (AKKFAVLGKP…NAVLGTNETK (286 aa)) are shikimate dehydrogenase.

This sequence in the N-terminal section; belongs to the sugar phosphate cyclases superfamily. Dehydroquinate synthase family. In the 2nd section; belongs to the EPSP synthase family. It in the 3rd section; belongs to the shikimate kinase family. The protein in the 4th section; belongs to the type-I 3-dehydroquinase family. This sequence in the C-terminal section; belongs to the shikimate dehydrogenase family. Homodimer. Zn(2+) serves as cofactor.

It is found in the cytoplasm. The enzyme catalyses 7-phospho-2-dehydro-3-deoxy-D-arabino-heptonate = 3-dehydroquinate + phosphate. It carries out the reaction 3-dehydroquinate = 3-dehydroshikimate + H2O. The catalysed reaction is shikimate + NADP(+) = 3-dehydroshikimate + NADPH + H(+). It catalyses the reaction shikimate + ATP = 3-phosphoshikimate + ADP + H(+). The enzyme catalyses 3-phosphoshikimate + phosphoenolpyruvate = 5-O-(1-carboxyvinyl)-3-phosphoshikimate + phosphate. It functions in the pathway metabolic intermediate biosynthesis; chorismate biosynthesis; chorismate from D-erythrose 4-phosphate and phosphoenolpyruvate: step 2/7. The protein operates within metabolic intermediate biosynthesis; chorismate biosynthesis; chorismate from D-erythrose 4-phosphate and phosphoenolpyruvate: step 3/7. Its pathway is metabolic intermediate biosynthesis; chorismate biosynthesis; chorismate from D-erythrose 4-phosphate and phosphoenolpyruvate: step 4/7. It participates in metabolic intermediate biosynthesis; chorismate biosynthesis; chorismate from D-erythrose 4-phosphate and phosphoenolpyruvate: step 5/7. It functions in the pathway metabolic intermediate biosynthesis; chorismate biosynthesis; chorismate from D-erythrose 4-phosphate and phosphoenolpyruvate: step 6/7. The AROM polypeptide catalyzes 5 consecutive enzymatic reactions in prechorismate polyaromatic amino acid biosynthesis. This Talaromyces marneffei (strain ATCC 18224 / CBS 334.59 / QM 7333) (Penicillium marneffei) protein is Pentafunctional AROM polypeptide 2.